The chain runs to 597 residues: MSHEGSRQARDRGVTRSKAEKARPPTQPVPQVDIVPGRLNEAEWIAFMSLEEGEDIVGDILADLVTRVMECAFKVYLTQQCVPFTISQAREAMLQITEWRFLARDEGESAVAEDPTWGEDEEPLACTTDAWAQGSVPVLHAPAPVGVEEHFHNEEPGNPDQFLIDSSWLGRESQEPTQSSEPSAEPRVNPRPTPAMEVFEEAEPRDALEVPHRQESILTVPSKESLRPTLEVQTVHSPQLSPKLSQVVSLQTCERTGSSFGSHLSLQDLYHCVPQPDAAGDRLNLKNKGQLCRSSIGSADRSLLSVPTPDGPSPFLQPGGMERRPSHKTPTMRLDPSRLPRHWVRPVAEVLIPDLEARPLEIYRVRPRKSQVGASASESQALGSRTHSKLQVSIPRFPLKRCATFRSSGPDPTLNLAQSSPSFGSNLPFLSPGFRFLARNLVPPDVASAPSPKLWPRAKWPSGWEREAEQLGELWAGRTRVPPQGQEPVEDSVSEDSGWPLAVPQVLEATSQVLWKPMVISENMKLVPGVSMWNRGTQELLNPAAIQEEAEEGTPQAPEQQPIQTGVSKPQVIMKQLRNETPKAWLLPTKPVPHSGS.

The segment covering 1–23 has biased composition (basic and acidic residues); that stretch reads MSHEGSRQARDRGVTRSKAEKAR. 2 disordered regions span residues 1–32 and 171–192; these read MSHE…VPQV and RESQ…NPRP. Residues 175 to 186 are compositionally biased toward low complexity; sequence EPTQSSEPSAEP. 2 positions are modified to phosphoserine: S237 and S241. Disordered regions lie at residues 302 to 335 and 549 to 569; these read SLLS…MRLD and EAEE…GVSK. A compositionally biased stretch (polar residues) spans 557 to 568; that stretch reads APEQQPIQTGVS.

This is an uncharacterized protein from Rattus norvegicus (Rat).